Reading from the N-terminus, the 414-residue chain is UDP-N-acetylmuramoylalanine--D-glutamate ligase (414 aa).

Residue 104 to 110 coordinates ATP; it reads GSNGKST.

This sequence belongs to the MurCDEF family.

Its subcellular location is the cytoplasm. The catalysed reaction is UDP-N-acetyl-alpha-D-muramoyl-L-alanine + D-glutamate + ATP = UDP-N-acetyl-alpha-D-muramoyl-L-alanyl-D-glutamate + ADP + phosphate + H(+). Its pathway is cell wall biogenesis; peptidoglycan biosynthesis. Functionally, cell wall formation. Catalyzes the addition of glutamate to the nucleotide precursor UDP-N-acetylmuramoyl-L-alanine (UMA). In Francisella philomiragia subsp. philomiragia (strain ATCC 25017 / CCUG 19701 / FSC 153 / O#319-036), this protein is UDP-N-acetylmuramoylalanine--D-glutamate ligase.